Reading from the N-terminus, the 1155-residue chain is DNA-directed RNA polymerase subunit beta (1155 aa).

This sequence belongs to the RNA polymerase beta chain family. The RNAP catalytic core consists of 2 alpha, 1 beta, 1 beta' and 1 omega subunit. When a sigma factor is associated with the core the holoenzyme is formed, which can initiate transcription.

It catalyses the reaction RNA(n) + a ribonucleoside 5'-triphosphate = RNA(n+1) + diphosphate. DNA-dependent RNA polymerase catalyzes the transcription of DNA into RNA using the four ribonucleoside triphosphates as substrates. In Borreliella burgdorferi (strain ZS7) (Borrelia burgdorferi), this protein is DNA-directed RNA polymerase subunit beta.